The chain runs to 245 residues: Phycocyanobilin:ferredoxin oxidoreductase (245 aa).

This sequence belongs to the HY2 family.

The catalysed reaction is (2R,3Z)-phycocyanobilin + 4 oxidized [2Fe-2S]-[ferredoxin] = biliverdin IXalpha + 4 reduced [2Fe-2S]-[ferredoxin] + 4 H(+). Functionally, catalyzes the four-electron reduction of biliverdin IX-alpha (2-electron reduction at both the A and D rings); the reaction proceeds via an isolatable 2-electron intermediate, 181,182-dihydrobiliverdin. In Nostoc punctiforme (strain ATCC 29133 / PCC 73102), this protein is Phycocyanobilin:ferredoxin oxidoreductase (pcyA).